A 465-amino-acid polypeptide reads, in one-letter code: Probable protein phosphatase 2C 71 (465 aa).

Disordered stretches follow at residues 14 to 47 (RPCK…ACRA), 68 to 119 (RPRD…GEVT), and 133 to 191 (SGGA…PAEE). Residues 18–30 (LAPPPPPPLPVSP) show a composition bias toward pro residues. Low complexity-rich tracts occupy residues 84 to 106 (AVAP…AAAE) and 133 to 143 (SGGAEATATSG). The 239-residue stretch at 222-460 (ASGAAILPHP…DDIAVVVSIV (239 aa)) folds into the PPM-type phosphatase domain. Mn(2+) is bound by residues D254, G255, D384, and D451.

The protein belongs to the PP2C family. The cofactor is Mg(2+). Requires Mn(2+) as cofactor.

The enzyme catalyses O-phospho-L-seryl-[protein] + H2O = L-seryl-[protein] + phosphate. It catalyses the reaction O-phospho-L-threonyl-[protein] + H2O = L-threonyl-[protein] + phosphate. The polypeptide is Probable protein phosphatase 2C 71 (Oryza sativa subsp. japonica (Rice)).